The chain runs to 522 residues: L-tyrosine/L-DOPA decarboxylase 2 (522 aa).

2 repeat units span residues 75-132 and 135-186. The 2 X approximate tandem repeats stretch occupies residues 75–186; sequence KDVHDDIVPG…RILDRIGREH (112 aa). 4 residues coordinate pyridoxal 5'-phosphate: Thr163, Cys164, Thr258, and Asn312. Residue Lys315 is modified to N6-(pyridoxal phosphate)lysine.

This sequence belongs to the group II decarboxylase family. The cofactor is pyridoxal 5'-phosphate. In terms of tissue distribution, strongly expressed in all tissues, particularly in thick roots.

The catalysed reaction is L-tyrosine + H(+) = tyramine + CO2. It carries out the reaction L-dopa + H(+) = dopamine + CO2. The protein operates within aromatic compound metabolism. It functions in the pathway alkaloid biosynthesis. In terms of biological role, aromatic amino acid decarboxylase participating in the biosynthesis of natural products derived from phenylethylamine, including mescaline, a natural hallucinogen potentially used in psychotherapeutic treatments. Catalyzes the decarboxylation of L-tyrosine and L-DOPA. This is L-tyrosine/L-DOPA decarboxylase 2 from Lophophora williamsii (Peyote).